We begin with the raw amino-acid sequence, 148 residues long: Hemoglobin subunit beta-1 (148 aa).

A Globin domain is found at 3-148 (EWTDAERTAI…VVSALCRQYH (146 aa)). Residues histidine 64 and histidine 93 each coordinate heme b.

Heterotetramer of two alpha chains and two beta chains. Red blood cells.

Functionally, involved in oxygen transport from gills to the various peripheral tissues. The sequence is that of Hemoglobin subunit beta-1 (ba1) from Danio rerio (Zebrafish).